Here is a 508-residue protein sequence, read N- to C-terminus: Photosystem II CP47 reaction center protein (508 aa).

6 helical membrane passes run 21-36 (AVHL…WAGS), 101-115 (IVLS…IWHW), 140-156 (GIHL…FGAF), 203-218 (IAAG…FHLS), 237-252 (VLSS…AFVV), and 457-472 (CFAL…HGSR).

This sequence belongs to the PsbB/PsbC family. PsbB subfamily. In terms of assembly, PSII is composed of 1 copy each of membrane proteins PsbA, PsbB, PsbC, PsbD, PsbE, PsbF, PsbH, PsbI, PsbJ, PsbK, PsbL, PsbM, PsbT, PsbX, PsbY, PsbZ, Psb30/Ycf12, at least 3 peripheral proteins of the oxygen-evolving complex and a large number of cofactors. It forms dimeric complexes. The cofactor is Binds multiple chlorophylls. PSII binds additional chlorophylls, carotenoids and specific lipids..

It is found in the plastid. Its subcellular location is the chloroplast thylakoid membrane. One of the components of the core complex of photosystem II (PSII). It binds chlorophyll and helps catalyze the primary light-induced photochemical processes of PSII. PSII is a light-driven water:plastoquinone oxidoreductase, using light energy to abstract electrons from H(2)O, generating O(2) and a proton gradient subsequently used for ATP formation. This Zygnema circumcarinatum (Green alga) protein is Photosystem II CP47 reaction center protein.